A 357-amino-acid polypeptide reads, in one-letter code: DNA polymerase IV (357 aa).

In terms of domain architecture, UmuC spans 4 to 185 (IIHVDMDCYF…LSLRQIPGVG (182 aa)). 2 residues coordinate Mg(2+): aspartate 8 and aspartate 103. Glutamate 104 is an active-site residue.

It belongs to the DNA polymerase type-Y family. Monomer. It depends on Mg(2+) as a cofactor.

The protein localises to the cytoplasm. It carries out the reaction DNA(n) + a 2'-deoxyribonucleoside 5'-triphosphate = DNA(n+1) + diphosphate. Functionally, poorly processive, error-prone DNA polymerase involved in untargeted mutagenesis. Copies undamaged DNA at stalled replication forks, which arise in vivo from mismatched or misaligned primer ends. These misaligned primers can be extended by PolIV. Exhibits no 3'-5' exonuclease (proofreading) activity. May be involved in translesional synthesis, in conjunction with the beta clamp from PolIII. The polypeptide is DNA polymerase IV (Shewanella oneidensis (strain ATCC 700550 / JCM 31522 / CIP 106686 / LMG 19005 / NCIMB 14063 / MR-1)).